The following is a 170-amino-acid chain: Large ribosomal subunit protein uL15 (170 aa).

Over residues M1–A12 the composition is skewed to basic and acidic residues. The disordered stretch occupies residues M1–G52. The span at H13 to G26 shows a compositional bias: basic residues.

The protein belongs to the universal ribosomal protein uL15 family. In terms of assembly, part of the 50S ribosomal subunit.

Its function is as follows. Binds to the 23S rRNA. This Chloroflexus aurantiacus (strain ATCC 29366 / DSM 635 / J-10-fl) protein is Large ribosomal subunit protein uL15.